We begin with the raw amino-acid sequence, 266 residues long: Large ribosomal subunit protein uL2c (266 aa).

Residues 1 to 24 (MAIHLYKTSTPSTRNGTVDSQVKS) form a disordered region. A compositionally biased stretch (polar residues) spans 7 to 24 (KTSTPSTRNGTVDSQVKS).

The protein belongs to the universal ribosomal protein uL2 family. Part of the 50S ribosomal subunit.

Its subcellular location is the plastid. It is found in the chloroplast. The polypeptide is Large ribosomal subunit protein uL2c (rpl2) (Nicotiana debneyi (Debney's tobacco)).